A 225-amino-acid polypeptide reads, in one-letter code: Urease accessory protein UreG (225 aa).

25–32 serves as a coordination point for GTP; that stretch reads GPVGAGKT.

Belongs to the SIMIBI class G3E GTPase family. UreG subfamily. Homodimer. UreD, UreF and UreG form a complex that acts as a GTP-hydrolysis-dependent molecular chaperone, activating the urease apoprotein by helping to assemble the nickel containing metallocenter of UreC. The UreE protein probably delivers the nickel.

It is found in the cytoplasm. Functionally, facilitates the functional incorporation of the urease nickel metallocenter. This process requires GTP hydrolysis, probably effectuated by UreG. The protein is Urease accessory protein UreG of Haemophilus influenzae (strain 86-028NP).